The chain runs to 378 residues: Pulmonary surfactant-associated protein D (378 aa).

An N-terminal signal peptide occupies residues M1–G20. Residues C35 and C40 each carry the S-nitrosocysteine modification. The disordered stretch occupies residues M43–L221. Residues G46–P222 enclose the Collagen-like domain. Residues R50 to D65 show a composition bias toward basic and acidic residues. P78 is subject to 4-hydroxyproline. K87 bears the 5-hydroxylysine mark. The N-linked (GlcNAc...) asparagine glycan is linked to N90. The residue at position 96 (P96) is a 4-hydroxyproline. At K99 the chain carries 5-hydroxylysine. The span at C105–P114 shows a compositional bias: pro residues. The segment covering P137–E146 has biased composition (low complexity). P171 and P177 each carry 4-hydroxyproline. The segment covering E173 to A197 has biased composition (low complexity). The segment covering K204–K216 has biased composition (basic and acidic residues). Positions G223 to F254 form a coiled coil. Positions V260–F378 constitute a C-type lectin domain. Intrachain disulfides connect C281–C376 and C354–C368. An N-linked (GlcNAc...) asparagine glycan is attached at N323.

The protein belongs to the SFTPD family. Oligomeric complex of 4 set of homotrimers. In terms of processing, hydroxylation on proline residues within the sequence motif, GXPG, is most likely to be 4-hydroxy as this fits the requirement for 4-hydroxylation in vertebrates. S-nitrosylation at Cys-35 and Cys-40 alters the quaternary structure which results in a pro-inflammatory chemoattractive signaling activity with macrophages.

It localises to the secreted. The protein resides in the extracellular space. Its subcellular location is the extracellular matrix. The protein localises to the surface film. In terms of biological role, contributes to the lung's defense against inhaled microorganisms, organic antigens and toxins. Interacts with compounds such as bacterial lipopolysaccharides, oligosaccharides and fatty acids and modulates leukocyte action in immune response. May participate in the extracellular reorganization or turnover of pulmonary surfactant. Binds strongly maltose residues and to a lesser extent other alpha-glucosyl moieties. This Sus scrofa (Pig) protein is Pulmonary surfactant-associated protein D (SFTPD).